A 128-amino-acid polypeptide reads, in one-letter code: Fluoride-specific ion channel FluC (128 aa).

4 helical membrane passes run 5–25, 35–55, 67–87, and 96–116; these read IVAIFVGAGFGAVLRWFLALA, LGTLAANLIGGYVIGVAAVVF, LFVITGFLGGLTTFSTYSVEV, and FGWAIAVAALHLTGSFTLTAL. Residues Gly75 and Thr78 each coordinate Na(+).

It belongs to the fluoride channel Fluc/FEX (TC 1.A.43) family.

Its subcellular location is the cell inner membrane. The enzyme catalyses fluoride(in) = fluoride(out). Its activity is regulated as follows. Na(+) is not transported, but it plays an essential structural role and its presence is essential for fluoride channel function. In terms of biological role, fluoride-specific ion channel. Important for reducing fluoride concentration in the cell, thus reducing its toxicity. The chain is Fluoride-specific ion channel FluC from Burkholderia ambifaria (strain MC40-6).